The chain runs to 195 residues: Imidazoleglycerol-phosphate dehydratase (195 aa).

It belongs to the imidazoleglycerol-phosphate dehydratase family.

It localises to the cytoplasm. It carries out the reaction D-erythro-1-(imidazol-4-yl)glycerol 3-phosphate = 3-(imidazol-4-yl)-2-oxopropyl phosphate + H2O. The protein operates within amino-acid biosynthesis; L-histidine biosynthesis; L-histidine from 5-phospho-alpha-D-ribose 1-diphosphate: step 6/9. This Bordetella petrii (strain ATCC BAA-461 / DSM 12804 / CCUG 43448) protein is Imidazoleglycerol-phosphate dehydratase.